Reading from the N-terminus, the 565-residue chain is Maturase K (565 aa).

This sequence belongs to the intron maturase 2 family. MatK subfamily.

Its subcellular location is the plastid. The protein localises to the chloroplast. Usually encoded in the trnK tRNA gene intron. Probably assists in splicing its own and other chloroplast group II introns. In Staurastrum punctulatum (Green alga), this protein is Maturase K.